The chain runs to 737 residues: Protein OPG064 (737 aa).

Position 1 is an N-acetylmethionine; by host (methionine 1). A disulfide bridge links cysteine 496 with cysteine 535.

This sequence belongs to the orthopoxvirus OPG064 family. As to quaternary structure, interacts with host KLC2; this interaction promotes IEV trafficking by engaging the host kinesin-1 complex. Interacts with protein OPG056/F12. In terms of processing, N-acetylated on initiator methionine by host.

Plays a role in intracellular enveloped virus (IEV) transport to the cell surface on microtubules. Together with protein OPG056/F12, forms a complex that interacts with host KLC2 (kinesin light chain isoform 2) to engage the kinesin-1 complex and thereby promote IEV trafficking. This chain is Protein OPG064 (OPG064), found in Bos taurus (Bovine).